The sequence spans 292 residues: NIF3-like protein 1 (292 aa).

This sequence belongs to the GTP cyclohydrolase I type 2/NIF3 family.

This is NIF3-like protein 1 (anon-35F/36A) from Drosophila melanogaster (Fruit fly).